A 458-amino-acid polypeptide reads, in one-letter code: Flavohemoprotein (458 aa).

One can recognise a Globin domain in the interval 2–158; the sequence is PLSEDTIKAV…LAHLFVRREE (157 aa). Histidine 107 provides a ligand contact to heme b. Active-site charge relay system residues include tyrosine 117 and glutamate 157. The tract at residues 169–457 is reductase; the sequence is GGWRQTRSFR…FEMFGPFKPL (289 aa). In terms of domain architecture, FAD-binding FR-type spans 172 to 279; sequence RQTRSFRVEE…APPYGDFFLE (108 aa). FAD is bound by residues tyrosine 211 and 228-231; that span reads RQYS. Residue 320 to 325 coordinates NADP(+); sequence GIGQTP. Position 450-453 (450-453) interacts with FAD; that stretch reads MFGP.

Belongs to the globin family. Two-domain flavohemoproteins subfamily. This sequence in the C-terminal section; belongs to the flavoprotein pyridine nucleotide cytochrome reductase family. As to quaternary structure, monomer. Heme b serves as cofactor. FAD is required as a cofactor.

It carries out the reaction 2 nitric oxide + NADPH + 2 O2 = 2 nitrate + NADP(+) + H(+). It catalyses the reaction 2 nitric oxide + NADH + 2 O2 = 2 nitrate + NAD(+) + H(+). Its function is as follows. Flavohemoprotein involved in nitric oxide (NO) detoxification in an aerobic process, termed nitric oxide dioxygenase (NOD) reaction that utilizes O(2) and NAD(P)H to convert NO to nitrate, which protects the protozoan parasite from various noxious nitrogen compounds. Therefore, plays a central role in the inducible response to nitrosative stress. May also be involved in O(2) detoxification. The polypeptide is Flavohemoprotein (hmpA) (Giardia intestinalis (strain ATCC 50581 / GS clone H7) (Giardia lamblia)).